The sequence spans 184 residues: Large ribosomal subunit protein uL6 (184 aa).

The protein belongs to the universal ribosomal protein uL6 family. In terms of assembly, part of the 50S ribosomal subunit.

Functionally, this protein binds to the 23S rRNA, and is important in its secondary structure. It is located near the subunit interface in the base of the L7/L12 stalk, and near the tRNA binding site of the peptidyltransferase center. This is Large ribosomal subunit protein uL6 from Mycoplasma pneumoniae (strain ATCC 29342 / M129 / Subtype 1) (Mycoplasmoides pneumoniae).